The following is an 86-amino-acid chain: Large ribosomal subunit protein bL28 (86 aa).

It belongs to the bacterial ribosomal protein bL28 family.

This Bacteroides thetaiotaomicron (strain ATCC 29148 / DSM 2079 / JCM 5827 / CCUG 10774 / NCTC 10582 / VPI-5482 / E50) protein is Large ribosomal subunit protein bL28.